Reading from the N-terminus, the 163-residue chain is Putative 4-hydroxy-4-methyl-2-oxoglutarate aldolase (163 aa).

Residues 76 to 79 (GDMI) and Arg-98 each bind substrate. Asp-99 contributes to the a divalent metal cation binding site.

It belongs to the class II aldolase/RraA-like family. In terms of assembly, homotrimer. It depends on a divalent metal cation as a cofactor.

It carries out the reaction 4-hydroxy-4-methyl-2-oxoglutarate = 2 pyruvate. It catalyses the reaction oxaloacetate + H(+) = pyruvate + CO2. Functionally, catalyzes the aldol cleavage of 4-hydroxy-4-methyl-2-oxoglutarate (HMG) into 2 molecules of pyruvate. Also contains a secondary oxaloacetate (OAA) decarboxylase activity due to the common pyruvate enolate transition state formed following C-C bond cleavage in the retro-aldol and decarboxylation reactions. The chain is Putative 4-hydroxy-4-methyl-2-oxoglutarate aldolase from Pseudomonas fluorescens (strain SBW25).